We begin with the raw amino-acid sequence, 352 residues long: Homoserine O-acetyltransferase (352 aa).

The 294-residue stretch at 37–330 folds into the AB hydrolase-1 domain; it reads NAVLVCHALT…APHGHDTFLI (294 aa). The active-site Nucleophile is the Ser133. Arg206 is a substrate binding site. Residues Asp296 and His325 contribute to the active site. Asp326 contributes to the substrate binding site.

This sequence belongs to the AB hydrolase superfamily. MetX family. Homodimer.

Its subcellular location is the cytoplasm. It catalyses the reaction L-homoserine + acetyl-CoA = O-acetyl-L-homoserine + CoA. It functions in the pathway amino-acid biosynthesis; L-methionine biosynthesis via de novo pathway; O-acetyl-L-homoserine from L-homoserine: step 1/1. Its function is as follows. Transfers an acetyl group from acetyl-CoA to L-homoserine, forming acetyl-L-homoserine. The chain is Homoserine O-acetyltransferase from Salinibacter ruber (strain DSM 13855 / M31).